Consider the following 141-residue polypeptide: Nucleoside diphosphate kinase (141 aa).

The ATP site is built by K11, F59, R87, T93, R104, and N114. The Pros-phosphohistidine intermediate role is filled by H117.

Belongs to the NDK family. Homotetramer. The cofactor is Mg(2+).

It localises to the cytoplasm. The catalysed reaction is a 2'-deoxyribonucleoside 5'-diphosphate + ATP = a 2'-deoxyribonucleoside 5'-triphosphate + ADP. It catalyses the reaction a ribonucleoside 5'-diphosphate + ATP = a ribonucleoside 5'-triphosphate + ADP. Its function is as follows. Major role in the synthesis of nucleoside triphosphates other than ATP. The ATP gamma phosphate is transferred to the NDP beta phosphate via a ping-pong mechanism, using a phosphorylated active-site intermediate. This is Nucleoside diphosphate kinase from Albidiferax ferrireducens (strain ATCC BAA-621 / DSM 15236 / T118) (Rhodoferax ferrireducens).